Here is a 732-residue protein sequence, read N- to C-terminus: Conidiogenone synthase (732 aa).

Residues 1–311 are terpene cyclase; sequence MADKITDEYA…SLCVPRYCKV (311 aa). Asp97 is a binding site for Mg(2+). Substrate-binding positions include Asp97, 169–172, Asn213, 217–221, and 307–308; these read RIVD, SWDKE, and RY. Residues 97–101 carry the DDXXD 1 motif; sequence DALNQ. The NSE/DTE signature appears at 213–221; that stretch reads NDLFSWDKE. Residues 312–732 form a prenyltransferase region; sequence DRNPYKDHLE…LRAMEETLQK (421 aa). Residues 348–370 are disordered; the sequence is KQSELKDPSSSTYKSHFSPLEPN. The isopentenyl diphosphate site is built by Lys402, Arg405, and His434. Positions 441 and 445 each coordinate Mg(2+). The DDXXD 2 signature appears at 441–445; the sequence is DDIQD. Residue Arg450 participates in dimethylallyl diphosphate binding. Isopentenyl diphosphate is bound at residue Arg451. Dimethylallyl diphosphate-binding residues include Lys529, Thr530, Gln565, Asn572, Lys582, and Lys592.

In the N-terminal section; belongs to the terpene synthase family. The protein in the C-terminal section; belongs to the FPP/GGPP synthase family. Hexamer. The cofactor is Mg(2+).

The enzyme catalyses isopentenyl diphosphate + (2E,6E)-farnesyl diphosphate = (2E,6E,10E)-geranylgeranyl diphosphate + diphosphate. Its pathway is secondary metabolite biosynthesis; terpenoid biosynthesis. Its function is as follows. Bifunctional terpene synthase; part of the gene cluster that mediates the biosynthesis of conidiogenone, a diterpene known to induce the conidiation. The bifunctional terpene synthase PchDS converts isopentenyl diphosphate (IPP) and dimethylallyl diphosphate (DMAPP) into deoxyconidiogenol. The C-terminal prenyltransferase (PT) domain of PchDS catalyzes formation of GGPP, whereas the N-terminal terpene cyclase (TC) domain catalyzes the cyclization of GGPP into deoxyconidiogenol. The cytochrome P450 monooxygenase PchP450 then catalyzes two rounds of oxidation to furnish conidiogenone. This chain is Conidiogenone synthase, found in Penicillium rubens (strain ATCC 28089 / DSM 1075 / NRRL 1951 / Wisconsin 54-1255) (Penicillium chrysogenum).